Reading from the N-terminus, the 197-residue chain is Pyridoxal 5'-phosphate synthase subunit PdxT (197 aa).

52-54 contacts L-glutamine; sequence GES. Cys-84 serves as the catalytic Nucleophile. L-glutamine-binding positions include Arg-111 and 139-140; that span reads IR. Catalysis depends on charge relay system residues His-175 and Glu-177.

This sequence belongs to the glutaminase PdxT/SNO family. In the presence of PdxS, forms a dodecamer of heterodimers. Only shows activity in the heterodimer.

It catalyses the reaction aldehydo-D-ribose 5-phosphate + D-glyceraldehyde 3-phosphate + L-glutamine = pyridoxal 5'-phosphate + L-glutamate + phosphate + 3 H2O + H(+). The catalysed reaction is L-glutamine + H2O = L-glutamate + NH4(+). It functions in the pathway cofactor biosynthesis; pyridoxal 5'-phosphate biosynthesis. Its function is as follows. Catalyzes the hydrolysis of glutamine to glutamate and ammonia as part of the biosynthesis of pyridoxal 5'-phosphate. The resulting ammonia molecule is channeled to the active site of PdxS. The sequence is that of Pyridoxal 5'-phosphate synthase subunit PdxT from Halorubrum lacusprofundi (strain ATCC 49239 / DSM 5036 / JCM 8891 / ACAM 34).